Consider the following 539-residue polypeptide: Phosphoenolpyruvate carboxykinase (ATP) (539 aa).

Arg-61, Tyr-195, and Lys-201 together coordinate substrate. Residues Lys-201, His-220, and 238–246 each bind ATP; that span reads GLSGTGKTT. The Mn(2+) site is built by Lys-201 and His-220. Asp-259 contributes to the Mn(2+) binding site. The ATP site is built by Glu-287, Arg-325, and Thr-450. Arg-325 contacts substrate.

This sequence belongs to the phosphoenolpyruvate carboxykinase (ATP) family. The cofactor is Mn(2+).

It is found in the cytoplasm. The enzyme catalyses oxaloacetate + ATP = phosphoenolpyruvate + ADP + CO2. It functions in the pathway carbohydrate biosynthesis; gluconeogenesis. In terms of biological role, involved in the gluconeogenesis. Catalyzes the conversion of oxaloacetate (OAA) to phosphoenolpyruvate (PEP) through direct phosphoryl transfer between the nucleoside triphosphate and OAA. This is Phosphoenolpyruvate carboxykinase (ATP) from Methylobacterium radiotolerans (strain ATCC 27329 / DSM 1819 / JCM 2831 / NBRC 15690 / NCIMB 10815 / 0-1).